A 1375-amino-acid polypeptide reads, in one-letter code: DNA-directed RNA polymerase subunit beta (1375 aa).

This sequence belongs to the RNA polymerase beta chain family. The RNAP catalytic core consists of 2 alpha, 1 beta, 1 beta' and 1 omega subunit. When a sigma factor is associated with the core the holoenzyme is formed, which can initiate transcription.

It catalyses the reaction RNA(n) + a ribonucleoside 5'-triphosphate = RNA(n+1) + diphosphate. In terms of biological role, DNA-dependent RNA polymerase catalyzes the transcription of DNA into RNA using the four ribonucleoside triphosphates as substrates. This is DNA-directed RNA polymerase subunit beta from Oleidesulfovibrio alaskensis (strain ATCC BAA-1058 / DSM 17464 / G20) (Desulfovibrio alaskensis).